The sequence spans 610 residues: Chaperone protein DnaK (610 aa).

Threonine 173 bears the Phosphothreonine; by autocatalysis mark. 2 disordered regions span residues 525 to 544 and 576 to 610; these read ENIG…ALKT and AAQQ…DDKK. A compositionally biased stretch (basic and acidic residues) spans 529 to 542; the sequence is EEDKKSAEEKKDAL. A compositionally biased stretch (low complexity) spans 576–592; that stretch reads AAQQQQQAQGANAGQNN. Over residues 599–610 the composition is skewed to basic and acidic residues; the sequence is AEFKEVKDDDKK.

The protein belongs to the heat shock protein 70 family.

Its function is as follows. Acts as a chaperone. The protein is Chaperone protein DnaK of Staphylococcus aureus (strain Mu3 / ATCC 700698).